The chain runs to 462 residues: Fumarate hydratase class II (462 aa).

Residues Ser-97–Thr-99, His-127–Asp-130, Ser-137–Asn-139, and Thr-185 each bind substrate. His-186 (proton donor/acceptor) is an active-site residue. The active site involves Ser-316. Substrate-binding positions include Ser-317 and Lys-322–Asn-324.

The protein belongs to the class-II fumarase/aspartase family. Fumarase subfamily. Homotetramer.

The protein resides in the cytoplasm. It carries out the reaction (S)-malate = fumarate + H2O. The protein operates within carbohydrate metabolism; tricarboxylic acid cycle; (S)-malate from fumarate: step 1/1. Its function is as follows. Involved in the TCA cycle. Catalyzes the stereospecific interconversion of fumarate to L-malate. The protein is Fumarate hydratase class II of Bacillus anthracis.